A 507-amino-acid polypeptide reads, in one-letter code: Histidine ammonia-lyase (507 aa).

Positions 141 to 143 (ASG) form a cross-link, 5-imidazolinone (Ala-Gly). The residue at position 142 (Ser142) is a 2,3-didehydroalanine (Ser).

The protein belongs to the PAL/histidase family. Contains an active site 4-methylidene-imidazol-5-one (MIO), which is formed autocatalytically by cyclization and dehydration of residues Ala-Ser-Gly.

The protein localises to the cytoplasm. It catalyses the reaction L-histidine = trans-urocanate + NH4(+). It functions in the pathway amino-acid degradation; L-histidine degradation into L-glutamate; N-formimidoyl-L-glutamate from L-histidine: step 1/3. The protein is Histidine ammonia-lyase of Cereibacter sphaeroides (strain ATCC 17023 / DSM 158 / JCM 6121 / CCUG 31486 / LMG 2827 / NBRC 12203 / NCIMB 8253 / ATH 2.4.1.) (Rhodobacter sphaeroides).